We begin with the raw amino-acid sequence, 429 residues long: MTKETASFFTDRLAAADPDVLTAINHELNRQRKQIELIASENIVSRAVLEAQGSVFTNKYAEGYPGKRYYQGCAPSDEIETLAIERAKKLFGSEFVNVQPHSGAQANGAVLLAVAKPGDTIMGLSLDAGGHLTHGAKAAMSGKWFNAVQYAVHPETQLIDYDQVRDLALKNKPRVIIAGGSAYPRHIDFAFFRKVADEVGATFMVDMAHFAGLVAGGVHPSPVPHAHITTTTTHKTLRGPRGGMILTDDPALAKKINSAVFPGMQGGPLMHVIAAKAVAFGEALQPSFKEYAKAVVENAQALAARLKERGSDLVTGGTDTHLALVDLRPLGVTGRDADCALERAGITCNKNGIPFDPLPPVKTSGIRLGSPAATTRGFRKAEFLQVADMIADVLDALSSKGEQGDPAVETAVRQRVEALCDRFPLYPEL.

(6S)-5,6,7,8-tetrahydrofolate-binding positions include leucine 126 and 130–132; that span reads GHL. Lysine 235 bears the N6-(pyridoxal phosphate)lysine mark.

It belongs to the SHMT family. As to quaternary structure, homodimer. The cofactor is pyridoxal 5'-phosphate.

The protein resides in the cytoplasm. The catalysed reaction is (6R)-5,10-methylene-5,6,7,8-tetrahydrofolate + glycine + H2O = (6S)-5,6,7,8-tetrahydrofolate + L-serine. Its pathway is one-carbon metabolism; tetrahydrofolate interconversion. It functions in the pathway amino-acid biosynthesis; glycine biosynthesis; glycine from L-serine: step 1/1. Functionally, catalyzes the reversible interconversion of serine and glycine with tetrahydrofolate (THF) serving as the one-carbon carrier. This reaction serves as the major source of one-carbon groups required for the biosynthesis of purines, thymidylate, methionine, and other important biomolecules. Also exhibits THF-independent aldolase activity toward beta-hydroxyamino acids, producing glycine and aldehydes, via a retro-aldol mechanism. This is Serine hydroxymethyltransferase from Zymomonas mobilis subsp. mobilis (strain ATCC 31821 / ZM4 / CP4).